The primary structure comprises 705 residues: Polyphosphate kinase (705 aa).

Asn-58 is a binding site for ATP. Residues Arg-389 and Arg-419 each coordinate Mg(2+). The Phosphohistidine intermediate role is filled by His-449. ATP-binding residues include Tyr-482, Arg-578, and His-606.

It belongs to the polyphosphate kinase 1 (PPK1) family. Mg(2+) serves as cofactor. In terms of processing, an intermediate of this reaction is the autophosphorylated ppk in which a phosphate is covalently linked to a histidine residue through a N-P bond.

It catalyses the reaction [phosphate](n) + ATP = [phosphate](n+1) + ADP. Catalyzes the reversible transfer of the terminal phosphate of ATP to form a long-chain polyphosphate (polyP). In Halalkalibacterium halodurans (strain ATCC BAA-125 / DSM 18197 / FERM 7344 / JCM 9153 / C-125) (Bacillus halodurans), this protein is Polyphosphate kinase.